The primary structure comprises 49 residues: Large ribosomal subunit protein bL33 (49 aa).

It belongs to the bacterial ribosomal protein bL33 family.

The chain is Large ribosomal subunit protein bL33 from Fervidobacterium nodosum (strain ATCC 35602 / DSM 5306 / Rt17-B1).